Here is a 426-residue protein sequence, read N- to C-terminus: Gamma-glutamyl phosphate reductase (426 aa).

This sequence belongs to the gamma-glutamyl phosphate reductase family.

It is found in the cytoplasm. The catalysed reaction is L-glutamate 5-semialdehyde + phosphate + NADP(+) = L-glutamyl 5-phosphate + NADPH + H(+). It participates in amino-acid biosynthesis; L-proline biosynthesis; L-glutamate 5-semialdehyde from L-glutamate: step 2/2. Its function is as follows. Catalyzes the NADPH-dependent reduction of L-glutamate 5-phosphate into L-glutamate 5-semialdehyde and phosphate. The product spontaneously undergoes cyclization to form 1-pyrroline-5-carboxylate. In Ralstonia nicotianae (strain ATCC BAA-1114 / GMI1000) (Ralstonia solanacearum), this protein is Gamma-glutamyl phosphate reductase.